The following is a 1538-amino-acid chain: Arf-GAP with Rho-GAP domain, ANK repeat and PH domain-containing protein 3 (1538 aa).

Residues proline 4–glutamate 68 form the SAM domain. Disordered regions lie at residues aspartate 72–lysine 97, serine 125–asparagine 149, and alanine 215–glycine 242. A compositionally biased stretch (pro residues) spans threonine 82–lysine 97. The segment covering serine 216–alanine 241 has biased composition (basic and acidic residues). PH domains follow at residues valine 282–lysine 374 and arginine 389–threonine 478. The Arf-GAP domain occupies glutamate 479–proline 606. PH domains lie at alanine 671–leucine 785 and leucine 795–glycine 901. The Rho-GAP domain maps to threonine 903–phenylalanine 1084. In terms of domain architecture, Ras-associating spans glycine 1113–methionine 1206. The 103-residue stretch at glutamate 1219–histidine 1321 folds into the PH 5 domain. The residue at position 1344 (threonine 1344) is a Phosphothreonine. Phosphotyrosine is present on residues tyrosine 1399 and tyrosine 1404. Over residues tryptophan 1425–phenylalanine 1439 the composition is skewed to polar residues. Residues tryptophan 1425 to threonine 1538 are disordered. Serine 1438 and serine 1474 each carry phosphoserine. Composition is skewed to low complexity over residues glutamate 1476 to leucine 1486 and alanine 1494 to serine 1505. Pro residues predominate over residues proline 1506–serine 1529.

Interacts (via SAM domain) with INPPL1/SHIP2. Tyrosine phosphorylated at a low basal level. PDGF treatment stimulates phosphorylation. Tyrosine phosphorylation is increased in cells that are in the process of becoming attached to a substrate and that start spreading and flattening.

Its subcellular location is the cytoplasm. It localises to the cell membrane. It is found in the cytoskeleton. The protein resides in the cell projection. The protein localises to the lamellipodium. Its subcellular location is the ruffle. Its function is as follows. Phosphatidylinositol 3,4,5-trisphosphate-dependent GTPase-activating protein that modulates actin cytoskeleton remodeling by regulating ARF and RHO family members. Is activated by phosphatidylinositol 3,4,5-trisphosphate (PtdIns(3,4,5)P3) binding. Can be activated by phosphatidylinositol 3,4-bisphosphate (PtdIns(3,4,5)P2) binding, albeit with lower efficiency. Acts preferentially on ARF5 and on RHOA. The polypeptide is Arf-GAP with Rho-GAP domain, ANK repeat and PH domain-containing protein 3 (Arap3) (Mus musculus (Mouse)).